The chain runs to 202 residues: Nudix hydrolase 13, mitochondrial (202 aa).

Residues 18 to 167 enclose the Nudix hydrolase domain; the sequence is NFRLVSGCIP…WMQSALEEFL (150 aa). The short motif at 65–86 is the Nudix box element; sequence GGWEDDETVLEAASREAMEEAG. Mg(2+) is bound by residues glutamate 80 and glutamate 84.

Belongs to the Nudix hydrolase family. As to quaternary structure, monomer. It depends on Mg(2+) as a cofactor. In terms of tissue distribution, expressed in roots, leaves, stems and inflorescences.

It is found in the mitochondrion. With respect to regulation, inhibited by fluoride. Its function is as follows. Mediates the hydrolysis of some nucleoside diphosphate derivatives. Can use diadenosine 5',5'''-P(1)P(6) hexaphosphate (Ap(6)A), diadenosine 5',5'''-P(1)P(5) pentaphosphate (Ap(5)A) and adenosine tetraphosphate (p(4)A) as substrates, but not diadenosine 5',5'''-P(1)P(4) tetraphosphate (Ap(4)A), diadenosine 5',5'''-P(1)P(3) triphosphate (Ap(3)A), deoxyribonucleoside triphosphates, ribonucleoside triphosphates, diphosphoinositol pentakisphosphate (PP-InsP(5)) and 5-phospho-alpha-D-ribosyl diphosphate (PRPP). The sequence is that of Nudix hydrolase 13, mitochondrial (NUDT13) from Arabidopsis thaliana (Mouse-ear cress).